Consider the following 396-residue polypeptide: Seminal vesicle major clotting proteins (396 aa).

An N-terminal signal peptide occupies residues 1 to 21 (MKSTIFFILSLLLMLENQAAG). A disordered region spans residues 45–178 (MEEAVSGSGL…ASSVDHRKKG (134 aa)). The segment covering 60–152 (RGSDREESVG…RVSVRHERVE (93 aa)) has biased composition (basic and acidic residues). SVP-3/-4 repeat repeat units follow at residues 65-88 (EESV…RSSV), 89-112 (EEPE…RHNV), and 113-136 (EEPE…RHSA). An SVP-3/-4 repeat; truncated repeat occupies 137–157 (EEPEGERVSVRHERVEKTHKR). Positions 177-192 (KGHIRFKRQDPIAALA) are excised as a propeptide. SVP-1 clotting repeat units follow at residues 194–217 (IEGQ…ERFS), 218–241 (VKGQ…ERFS), 242–265 (VTGQ…ERFS), 266–289 (MTGQ…ERFS), 290–313 (MTGQ…ERFS), 314–337 (VTGQ…ERFS), 338–361 (VTGQ…ERFS), and 362–385 (VSGQ…SGFS). Residues 194-396 (IEGQDAVKDS…KGQGSLKGLI (203 aa)) are 9 X tandem repeats of SVP-1 like motif. Residues 377–396 (QESVQSGFSVKGQGSLKGLI) form a disordered region. Residues 386–396 (VKGQGSLKGLI) form an SVP-1 clotting 9; truncated repeat.

This sequence to the SVP-2 precursor, particularly in regions where protein processing must occur. SVP-3 may be a post-translationally modified form of SVP-4. Post-translationally, covalent clotting of SVP-1 is catalyzed by a transglutaminase secreted by the anterior prostate through the formation of gamma-glutamyl-epsilon-lysine cross-links. The conserved 2 Lys and 1 Gln residues per functional unit seem to be the residues involved in the formation of those cross-links.

The protein localises to the secreted. In terms of biological role, SVP-1 serves as substrate in the formation of the copulatory plug. SVP-3 and SVP-4 may also contribute to the clot. In Cavia porcellus (Guinea pig), this protein is Seminal vesicle major clotting proteins.